Consider the following 99-residue polypeptide: NADH-quinone oxidoreductase subunit K (99 aa).

Helical transmembrane passes span 3 to 23 (PENYLYLSVLLFTIGAAGVLL), 28 to 48 (IVVFMCIELMLNAANLAFVTF), and 62 to 82 (FFTMVVAAAEVVVGLAIIMII).

This sequence belongs to the complex I subunit 4L family. As to quaternary structure, NDH-1 is composed of 14 different subunits. Subunits NuoA, H, J, K, L, M, N constitute the membrane sector of the complex.

The protein resides in the cell membrane. The catalysed reaction is a quinone + NADH + 5 H(+)(in) = a quinol + NAD(+) + 4 H(+)(out). NDH-1 shuttles electrons from NADH, via FMN and iron-sulfur (Fe-S) centers, to quinones in the respiratory chain. The immediate electron acceptor for the enzyme in this species is believed to be a menaquinone. Couples the redox reaction to proton translocation (for every two electrons transferred, four hydrogen ions are translocated across the cytoplasmic membrane), and thus conserves the redox energy in a proton gradient. The protein is NADH-quinone oxidoreductase subunit K of Rhodococcus erythropolis (strain PR4 / NBRC 100887).